Consider the following 228-residue polypeptide: UPF0173 metal-dependent hydrolase BLi03080/BL00413 (228 aa).

It belongs to the UPF0173 family.

This Bacillus licheniformis (strain ATCC 14580 / DSM 13 / JCM 2505 / CCUG 7422 / NBRC 12200 / NCIMB 9375 / NCTC 10341 / NRRL NRS-1264 / Gibson 46) protein is UPF0173 metal-dependent hydrolase BLi03080/BL00413.